Here is a 505-residue protein sequence, read N- to C-terminus: Trans-cinnamate 4-monooxygenase (505 aa).

A helical transmembrane segment spans residues 3–23; sequence LLLLEKTLLALFLAAITAITI. Residues 213–218 and alanine 306 each bind (E)-cinnamate; that span reads RSRLAQ. Heme is bound at residue cysteine 447.

This sequence belongs to the cytochrome P450 family. Requires heme as cofactor.

The protein resides in the membrane. It catalyses the reaction (E)-cinnamate + reduced [NADPH--hemoprotein reductase] + O2 = (E)-4-coumarate + oxidized [NADPH--hemoprotein reductase] + H2O + H(+). It functions in the pathway phenylpropanoid metabolism; trans-4-coumarate biosynthesis; trans-4-coumarate from trans-cinnamate: step 1/1. Catalyzes the first oxidative step of the phenylpropanoid pathway in higher plants by transforming trans-cinnamate into p-coumarate. The compounds formed by this pathway are essential components for lignification, pollination, and defense against ultraviolet light, predators and pathogens. This Pisum sativum (Garden pea) protein is Trans-cinnamate 4-monooxygenase (CYP73A9).